The following is a 945-amino-acid chain: Xylosyltransferase 1 (945 aa).

Topologically, residues 1–17 (MQAAPCARRLARRSHSA) are cytoplasmic. A helical; Signal-anchor for type II membrane protein membrane pass occupies residues 18–38 (LLAALTVLLLQTLVVWNFSSL). The Lumenal portion of the chain corresponds to 39 to 945 (DSGAGERRGG…GAVKPDGRLR (907 aa)). The interval 42–245 (AGERRGGAAV…KYDQPPKCDI (204 aa)) is disordered. A compositionally biased stretch (gly residues) spans 76–103 (RGGGGGGGGCGGGGRGPQARARGGGPGE). Residues 131–147 (KVRTDSNNENSVPKDFE) show a composition bias toward basic and acidic residues. Residues 149–158 (VDNSNFAPRT) are compositionally biased toward polar residues. The segment covering 163 to 190 (HQPELAKKPPSRQKELLKRKLEQQEKGK) has biased composition (basic and acidic residues). N-linked (GlcNAc...) asparagine glycosylation is present at Asn-212. Residues 235-245 (TKYDQPPKCDI) show a composition bias toward basic and acidic residues. 4 cysteine pairs are disulfide-bonded: Cys-243–Cys-271, Cys-287–Cys-528, Cys-547–Cys-560, and Cys-549–Cys-558. UDP-alpha-D-xylose-binding positions include Val-319, Asp-347, and 376–378 (TIW). Asn-407 carries an N-linked (GlcNAc...) asparagine glycan. 480–481 (DW) serves as a coordination point for UDP-alpha-D-xylose. UDP-alpha-D-xylose is bound by residues Ser-561 and 584 to 585 (RK). Cystine bridges form between Cys-661–Cys-913 and Cys-906–Cys-919. Asn-763 is a glycosylation site (N-linked (GlcNAc...) asparagine). Residues 926–945 (SFSPDPKSELGAVKPDGRLR) form a disordered region.

This sequence belongs to the glycosyltransferase 14 family. XylT subfamily. As to quaternary structure, monomer. A divalent metal cation is required as a cofactor. Post-translationally, contains 7 disulfide bonds. In terms of processing, N-glycosylated.

Its subcellular location is the golgi apparatus membrane. It carries out the reaction UDP-alpha-D-xylose + L-seryl-[protein] = 3-O-(beta-D-xylosyl)-L-seryl-[protein] + UDP + H(+). The protein operates within glycan metabolism; chondroitin sulfate biosynthesis. Its pathway is glycan metabolism; heparan sulfate biosynthesis. Catalyzes the first step in the biosynthesis of chondroitin sulfate and dermatan sulfate proteoglycans, such as DCN. Transfers D-xylose from UDP-D-xylose to specific serine residues of the core protein. Required for normal maturation of chondrocytes during bone development, normal onset of ossification and normal embryonic and postnatal skeleton development, especially of the long bones. The polypeptide is Xylosyltransferase 1 (XYLT1) (Pan troglodytes (Chimpanzee)).